Consider the following 199-residue polypeptide: Recombination protein RecR (199 aa).

The C4-type zinc finger occupies 58 to 73; it reads CSICCNITDTDPCSMC. Residues 81–176 enclose the Toprim domain; it reads SVICVVEDPR…KVTRIAHGLP (96 aa).

The protein belongs to the RecR family.

Functionally, may play a role in DNA repair. It seems to be involved in an RecBC-independent recombinational process of DNA repair. It may act with RecF and RecO. The sequence is that of Recombination protein RecR from Clostridioides difficile (strain 630) (Peptoclostridium difficile).